The primary structure comprises 490 residues: ATP synthase subunit beta, plastid (490 aa).

Position 170 to 177 (Gly-170 to Thr-177) interacts with ATP.

This sequence belongs to the ATPase alpha/beta chains family. As to quaternary structure, F-type ATPases have 2 components, CF(1) - the catalytic core - and CF(0) - the membrane proton channel. CF(1) has five subunits: alpha(3), beta(3), gamma(1), delta(1), epsilon(1). CF(0) has four main subunits: a(1), b(1), b'(1) and c(9-12).

It localises to the plastid thylakoid membrane. It catalyses the reaction ATP + H2O + 4 H(+)(in) = ADP + phosphate + 5 H(+)(out). Functionally, produces ATP from ADP in the presence of a proton gradient across the membrane. The catalytic sites are hosted primarily by the beta subunits. The chain is ATP synthase subunit beta, plastid from Cuscuta reflexa (Southern Asian dodder).